Here is a 180-residue protein sequence, read N- to C-terminus: MWGCGWSRILVLLLLMCMALMARGTYGAYICSPNPGRLRISCALSVLDQRLWWEIQYSSGRLTRVLVFHDEGEEGDDVHLTDTHHCTSCTHPYVISLVTPLTINATLRLLIRDGMYGRGEKELCIAHLPTLRDIRTCRVDADLGLLYAVCLILSFSIVTAALWKVDYDRSVAVVSKSYKS.

The N-terminal stretch at 1–27 is a signal peptide; sequence MWGCGWSRILVLLLLMCMALMARGTYG. A helical transmembrane segment spans residues 143–163; that stretch reads LGLLYAVCLILSFSIVTAALW.

It belongs to the HHV-5 UL121 protein family.

It is found in the host membrane. The chain is Membrane protein UL121 (UL121) from Human cytomegalovirus (strain Merlin) (HHV-5).